The chain runs to 641 residues: MSTGAQTKAAEASQHADGPRLLADVGGTNARFALETGPGEITQIRVYPGAEYPTLTDAIRRYLKDVKIGRVNHAAIAIANPVDGDQVRMTNHNWSFSIEATRRALGFDTLLVVNDFTALAMALPGLTDAQRVQIGAGARRQNSVIGLMGPGTGLGVSGLIPADDRWIALGSEGGHATFAPMDEREDLVLQYARRKYPHVSFERVCAGPGMEIIYRALAARDKKRIAANVVTADIVERAHAGDALALEAVECFCGILGTFAGNLAVTLGALGGIYIGGGVVPKLGELFMRSPFRARFEAKGRFEAYLANIPTYLITAEYPAFLGVSAILAEQLSNRTGGASSAVFERIRQMRDALTPAERRVADLALNHPRSIINDPIVDIARKADVSQPTVIRFCRSLGCQGLSDFKLKLATGLTGTIPMSHSQVHLGDTATDFGAKVLDNTVSAILQLREHLNFEHVEQAIDILNNARRIEFYGLGNSNIVAQDAHYKFFRFGIPTIAYGDLYMQAASAALLGKGDVIVAVSKSGRAPELLRVLDVAMQAGAKVIAITSSNTPLAKRATVALETDHIEMRESQLSMISRILHLVMIDILAVGVAIRRASPNAELAEAMARAKARAGASAGDEAADVLDWLSHGAAPAAKE.

Residues 1–21 (MSTGAQTKAAEASQHADGPRL) form a disordered region. Residues 1-340 (MSTGAQTKAA…QLSNRTGGAS (340 aa)) form a glucokinase region. Residue 23–28 (ADVGGT) coordinates ATP. Positions 341 to 417 (SAVFERIRQM…LKLATGLTGT (77 aa)) constitute an HTH rpiR-type domain. Residues 341 to 641 (SAVFERIRQM…SHGAAPAAKE (301 aa)) form a putative HTH-type transcriptional regulator region. Residues 377–396 (IVDIARKADVSQPTVIRFCR) constitute a DNA-binding region (H-T-H motif). An SIS domain is found at 461–600 (AIDILNNARR…AVGVAIRRAS (140 aa)). The chain crosses the membrane as a helical span at residues 576–596 (SMISRILHLVMIDILAVGVAI).

This sequence in the N-terminal section; belongs to the bacterial glucokinase family.

The protein resides in the membrane. It catalyses the reaction D-glucose + ATP = D-glucose 6-phosphate + ADP + H(+). This is Bifunctional protein glk (glk) from Burkholderia thailandensis (strain ATCC 700388 / DSM 13276 / CCUG 48851 / CIP 106301 / E264).